The chain runs to 109 residues: RNA-binding protein Hfq (109 aa).

Residues 9–68 enclose the Sm domain; that stretch reads DPFLNALRKEKVSVSVYLVNGIKLQGQVEAFDQFCIVLRNTVNQMVYKHAISTIVPAKSV. The segment at 77 to 109 is disordered; it reads PYHQNSNDEQDENVDDIHSDDLEIQENEGNIHE.

It belongs to the Hfq family. Homohexamer.

RNA chaperone that binds small regulatory RNA (sRNAs) and mRNAs to facilitate mRNA translational regulation in response to envelope stress, environmental stress and changes in metabolite concentrations. Also binds with high specificity to tRNAs. In Francisella tularensis subsp. holarctica (strain FTNF002-00 / FTA), this protein is RNA-binding protein Hfq.